Here is a 180-residue protein sequence, read N- to C-terminus: ATP synthase subunit delta (180 aa).

The protein belongs to the ATPase delta chain family. F-type ATPases have 2 components, F(1) - the catalytic core - and F(0) - the membrane proton channel. F(1) has five subunits: alpha(3), beta(3), gamma(1), delta(1), epsilon(1). F(0) has three main subunits: a(1), b(2) and c(10-14). The alpha and beta chains form an alternating ring which encloses part of the gamma chain. F(1) is attached to F(0) by a central stalk formed by the gamma and epsilon chains, while a peripheral stalk is formed by the delta and b chains.

Its subcellular location is the cell inner membrane. Functionally, f(1)F(0) ATP synthase produces ATP from ADP in the presence of a proton or sodium gradient. F-type ATPases consist of two structural domains, F(1) containing the extramembraneous catalytic core and F(0) containing the membrane proton channel, linked together by a central stalk and a peripheral stalk. During catalysis, ATP synthesis in the catalytic domain of F(1) is coupled via a rotary mechanism of the central stalk subunits to proton translocation. In terms of biological role, this protein is part of the stalk that links CF(0) to CF(1). It either transmits conformational changes from CF(0) to CF(1) or is implicated in proton conduction. The sequence is that of ATP synthase subunit delta from Geobacter metallireducens (strain ATCC 53774 / DSM 7210 / GS-15).